Reading from the N-terminus, the 364-residue chain is Peptide chain release factor 2 (364 aa).

Glutamine 251 is modified (N5-methylglutamine).

Belongs to the prokaryotic/mitochondrial release factor family. Methylated by PrmC. Methylation increases the termination efficiency of RF2.

Its subcellular location is the cytoplasm. Peptide chain release factor 2 directs the termination of translation in response to the peptide chain termination codons UGA and UAA. The polypeptide is Peptide chain release factor 2 (prfB) (Buchnera aphidicola subsp. Schizaphis graminum (strain Sg)).